The chain runs to 205 residues: Thymidine kinase (205 aa).

ATP-binding positions include S9–S16 and D87–Q90. The active-site Proton acceptor is the E88. The Zn(2+) site is built by C145, C147, C182, and H185.

The protein belongs to the thymidine kinase family. In terms of assembly, homotetramer.

It is found in the cytoplasm. The catalysed reaction is thymidine + ATP = dTMP + ADP + H(+). Allosteric enzyme which is feedback inhibited by dTTP and activated by a number of dNDP and dNTP. Phosphorylates both thymidine and deoxyuridine. This Escherichia coli (strain K12) protein is Thymidine kinase.